The chain runs to 453 residues: MTTDTIVAQATAPGRGGVGIIRVSGDLATNVAIAVLGHIPKTRYADYCDFKDEAGEVIDQGIALFFKGPNSFTGEDVLELQGHGGQIVLDMLIKRVMEVDGLRIAKPGEFSEQAFMNDKLDLTQAEAIADLIDATSEQAAKSALNSLQGEFSTQIHDLVEKVTNLRLYVEAAIDFPDEEVDFLSDGKIAASLNGIVGKLDGVQASAKQGSIIREGMKVVIAGRPNAGKSSLLNALAGKESAIVTEIAGTTRDVLREHIHLDGMPLHIIDTAGLRDTVDTVEKIGIERAWDEIKTADRVLFMVDGTTTAAIDPHEIWPDFIDRLPSNLGVTVVRNKADLTGEDLSVTQEAGHSVYRISAKTGLGVEDLKQHLKSLMGYQSNLEGGFIARRRHLEALDLASSHLMLGKEQLEVYQAGELLAEELRMCQMALSEITGKFTSDDLLGKIFSSFCIGK.

(6S)-5-formyl-5,6,7,8-tetrahydrofolate contacts are provided by Arg22, Glu79, and Lys119. Residues 215–376 (GMKVVIAGRP…LKQHLKSLMG (162 aa)) form the TrmE-type G domain. Asn225 lines the K(+) pocket. Residues 225–230 (NAGKSS), 244–250 (TEIAGTT), 269–272 (DTAG), and 334–337 (NKAD) each bind GTP. Mg(2+) is bound at residue Ser229. Residues Thr244, Ile246, and Thr249 each contribute to the K(+) site. A Mg(2+)-binding site is contributed by Thr250. Lys453 contributes to the (6S)-5-formyl-5,6,7,8-tetrahydrofolate binding site.

This sequence belongs to the TRAFAC class TrmE-Era-EngA-EngB-Septin-like GTPase superfamily. TrmE GTPase family. Homodimer. Heterotetramer of two MnmE and two MnmG subunits. K(+) serves as cofactor.

The protein resides in the cytoplasm. Exhibits a very high intrinsic GTPase hydrolysis rate. Involved in the addition of a carboxymethylaminomethyl (cmnm) group at the wobble position (U34) of certain tRNAs, forming tRNA-cmnm(5)s(2)U34. In Shewanella pealeana (strain ATCC 700345 / ANG-SQ1), this protein is tRNA modification GTPase MnmE.